The chain runs to 160 residues: Crossover junction endodeoxyribonuclease RuvC (160 aa).

Catalysis depends on residues Asp7, Glu70, and Asp142. Mg(2+) contacts are provided by Asp7, Glu70, and Asp142.

This sequence belongs to the RuvC family. As to quaternary structure, homodimer which binds Holliday junction (HJ) DNA. The HJ becomes 2-fold symmetrical on binding to RuvC with unstacked arms; it has a different conformation from HJ DNA in complex with RuvA. In the full resolvosome a probable DNA-RuvA(4)-RuvB(12)-RuvC(2) complex forms which resolves the HJ. Requires Mg(2+) as cofactor.

The protein resides in the cytoplasm. It catalyses the reaction Endonucleolytic cleavage at a junction such as a reciprocal single-stranded crossover between two homologous DNA duplexes (Holliday junction).. In terms of biological role, the RuvA-RuvB-RuvC complex processes Holliday junction (HJ) DNA during genetic recombination and DNA repair. Endonuclease that resolves HJ intermediates. Cleaves cruciform DNA by making single-stranded nicks across the HJ at symmetrical positions within the homologous arms, yielding a 5'-phosphate and a 3'-hydroxyl group; requires a central core of homology in the junction. The consensus cleavage sequence is 5'-(A/T)TT(C/G)-3'. Cleavage occurs on the 3'-side of the TT dinucleotide at the point of strand exchange. HJ branch migration catalyzed by RuvA-RuvB allows RuvC to scan DNA until it finds its consensus sequence, where it cleaves and resolves the cruciform DNA. The polypeptide is Crossover junction endodeoxyribonuclease RuvC (Ehrlichia ruminantium (strain Welgevonden)).